A 401-amino-acid polypeptide reads, in one-letter code: Nicotinate phosphoribosyltransferase (401 aa).

The residue at position 224 (His224) is a Phosphohistidine; by autocatalysis.

The protein belongs to the NAPRTase family. Transiently phosphorylated on a His residue during the reaction cycle. Phosphorylation strongly increases the affinity for substrates and increases the rate of nicotinate D-ribonucleotide production. Dephosphorylation regenerates the low-affinity form of the enzyme, leading to product release.

The catalysed reaction is nicotinate + 5-phospho-alpha-D-ribose 1-diphosphate + ATP + H2O = nicotinate beta-D-ribonucleotide + ADP + phosphate + diphosphate. Its pathway is cofactor biosynthesis; NAD(+) biosynthesis; nicotinate D-ribonucleotide from nicotinate: step 1/1. Functionally, catalyzes the synthesis of beta-nicotinate D-ribonucleotide from nicotinate and 5-phospho-D-ribose 1-phosphate at the expense of ATP. The polypeptide is Nicotinate phosphoribosyltransferase (Pseudomonas putida (strain ATCC 700007 / DSM 6899 / JCM 31910 / BCRC 17059 / LMG 24140 / F1)).